Consider the following 336-residue polypeptide: DNA repair protein Rad51 homolog (336 aa).

The span at 1–10 shows a compositional bias: polar residues; that stretch reads MEKLTNVQAQ. The disordered stretch occupies residues 1 to 20; sequence MEKLTNVQAQQEEEEEEGPL. 124-131 is a binding site for ATP; it reads GEFRCGKT.

Belongs to the RecA family. RAD51 subfamily. Interacts with Rrp6; the interaction is required for the recruitment of spn-A to the DNA-damage response foci. As to expression, highly expressed in ovaries.

It localises to the nucleus. Its subcellular location is the cytoplasm. Plays an important role in homologous strand exchange, a key step in DNA repair through homologous recombination (HR). Binds to single and double-stranded DNA and exhibits DNA-dependent ATPase activity. Underwinds duplex DNA. Spindle genes are required for each of the symmetry-breaking steps that generate polarity during egg axis formation; oocyte positioning at the posterior of the cyst to generate the first AP polarity and inhibition of gurken (grk) signaling to the follicle cell layer to polarize first the AP axis and then DV axis. May have a role in female meiosis. The protein is DNA repair protein Rad51 homolog (spn-A) of Drosophila melanogaster (Fruit fly).